Reading from the N-terminus, the 62-residue chain is Delta-theraphotoxin-Cg1a 1 (62 aa).

Positions 1-21 (MKTSILFVIFSLALLFALSAA) are cleaved as a signal peptide. The propeptide occupies 22 to 29 (TEIEETDR). 3 disulfide bridges follow: cysteine 31–cysteine 46, cysteine 38–cysteine 51, and cysteine 45–cysteine 58.

It belongs to the neurotoxin 10 (Hwtx-1) family. 33 (Jztx-1) subfamily. Expressed by the venom gland.

Its subcellular location is the secreted. Its function is as follows. Inhibits voltage-gated sodium channels, preferentially subtype Nav1.5/SCN5A (in cardiac myocytes), but also Nav1.6/SCN8A and Nav1.7/SCN9A (TTX-sensitive Nav in rat DRG neurons) and invertebrate Nav (in insect neurons) as well as voltage-gated potassium channels of the subtype Kv2.1/KCNB1. Is suggested to bind to site 3 of the sodium channels and inhibit the inactivation of the activated channels, thereby blocking neuronal transmission. On potassium channels, inhibits activation of channels with an IC(50) of 8.05 uM through a voltage sensor-trapping mechanism. Increases muscle contraction in several assays (mouse phrenic nerve-diaphragm, toad heart, rat vas deferens) and is suggested to act both presynaptically and postsynaptically. Moderately inhibits voltage-gated sodium channels and weakly inhibits voltage-gated potassium channel. Inhibits the inactivation of rat Nav1.2/SCN2A (IC(50)=870 nM), rat Nav1.3/SCN3A (IC(50)=845 nM), rat Nav1.4/SCN4A (IC(50)=339 nM), human Nav1.5/SCN5A (IC(50)=335 nM) and human Nav1.7/SCN9A sodium channels (IC(50)=348 nM). The toxin delays the inactivation of sodium channels without affecting the activation and steady-state inactivation kinetics in the physiological range of voltages. Site-directed mutagenesis of the sodium channel indicates that the toxin interacts with site 3 located at the extracellular S3-S4 linker of domain IV. On potassium channels, it inhibits activation of channels with an IC(50) of 8.05 uM through a voltage sensor-trapping mechanism. It increases muscle contraction in several assays (mouse phrenic nerve-diaphragm, toad heart, rat vas deferens) and is suggested to act both presynaptically and postsynaptically. The polypeptide is Delta-theraphotoxin-Cg1a 1 (Chilobrachys guangxiensis (Chinese earth tiger tarantula)).